The chain runs to 377 residues: Gastricsin (377 aa).

Residues 1–5 (QLLEA) form the signal peptide. 2 propeptides (activation peptide) span residues 6–31 (AVVK…LGEF) and 32–48 (LRTH…FGDL). Positions 62 to 374 (YFGEISIGTP…DLSNNRVGFA (313 aa)) constitute a Peptidase A1 domain. The active site involves D80. 2 disulfide bridges follow: C93/C98 and C256/C260. D265 is a catalytic residue. Residues C299 and C332 are joined by a disulfide bond.

The protein belongs to the peptidase A1 family. Each pepsinogen is converted to corresponding pepsin at pH 2.0 in part as a result of the release of a 47 AA activation segment and in part as a result of stepwise proteolytic cleavage via an intermediate form(s).

The protein localises to the secreted. The catalysed reaction is More restricted specificity than pepsin A, but shows preferential cleavage at Tyr-|-Xaa bonds. High activity on hemoglobin.. Its function is as follows. Hydrolyzes a variety of proteins. The sequence is that of Gastricsin (PGC) from Macaca fuscata fuscata (Japanese macaque).